A 303-amino-acid chain; its full sequence is Proteasome subunit beta (303 aa).

Residues 1 to 67 constitute a propeptide, removed in mature form; by autocatalysis; that stretch reads MTWQFPDRLS…SGGTGQLPHG (67 aa). The active-site Nucleophile is T68.

It belongs to the peptidase T1B family. The 20S proteasome core is composed of 14 alpha and 14 beta subunits that assemble into four stacked heptameric rings, resulting in a barrel-shaped structure. The two inner rings, each composed of seven catalytic beta subunits, are sandwiched by two outer rings, each composed of seven alpha subunits. The catalytic chamber with the active sites is on the inside of the barrel. Has a gated structure, the ends of the cylinder being occluded by the N-termini of the alpha-subunits. Is capped by the proteasome-associated ATPase, ARC.

It is found in the cytoplasm. It carries out the reaction Cleavage of peptide bonds with very broad specificity.. The protein operates within protein degradation; proteasomal Pup-dependent pathway. With respect to regulation, the formation of the proteasomal ATPase ARC-20S proteasome complex, likely via the docking of the C-termini of ARC into the intersubunit pockets in the alpha-rings, may trigger opening of the gate for substrate entry. Interconversion between the open-gate and close-gate conformations leads to a dynamic regulation of the 20S proteasome proteolysis activity. Component of the proteasome core, a large protease complex with broad specificity involved in protein degradation. The chain is Proteasome subunit beta from Mycobacterium avium (strain 104).